The chain runs to 205 residues: uncharacterized protein (205 aa).

Residues 51-189 (ANVDAVAILA…KKGFAIDVRL (139 aa)) form the Nudix hydrolase domain. Positions 90-111 (GLVDSKESCEDAAIRELREETG) match the Nudix box motif.

The protein belongs to the Nudix hydrolase family.

It is found in the cytoplasm. It localises to the nucleus. This is an uncharacterized protein from Schizosaccharomyces pombe (strain 972 / ATCC 24843) (Fission yeast).